The following is a 547-amino-acid chain: MFS-type transporter ungB (547 aa).

14 consecutive transmembrane segments (helical) span residues 14-34 (LLVT…ETVL), 50-70 (DVGW…MAWG), 80-100 (WVFL…GVSP), 111-131 (IAGL…SNTI), 138-158 (IYLG…PVIG), 169-189 (WCFF…VFCL), 210-230 (LLGS…LEWG), 238-258 (SWRV…FAVV), 279-299 (LGLI…VYYL), 316-336 (LAIL…GILV), 343-363 (TPFL…LSSL), 366-386 (ASGL…IGLG), 392-412 (VVPS…TLCF), and 475-495 (AVSE…LGSA). A disordered region spans residues 503 to 547 (PGHKEATEKVEGEGQGQGQQQEQDQGQGWGEVGESHALAHPTADK). Residues 504-514 (GHKEATEKVEG) show a composition bias toward basic and acidic residues.

This sequence belongs to the major facilitator superfamily. TCR/Tet family.

The protein resides in the membrane. MFS-type transporter; part of the gene cluster that mediates the biosynthesis of the unguisins, gamma-aminobutyric acid (GABA)-containing fungal cyclic heptapeptides with the amino acid sequence cyclo-(D-Ala1-D-Val2-L-Phe3-D-Val4-D-Ala5-D-Trp6-GABA7) for unguisin A and cyclo-(D-Ala1-D-Val2-L-Leu3-D-Val4-D-Ala5-D-Trp6-GABA7) for unguisin B. May be involved in the secretion of unguisins. The polypeptide is MFS-type transporter ungB (Aspergillus violaceofuscus (strain CBS 115571)).